The chain runs to 228 residues: Triosephosphate isomerase (228 aa).

9–11 (NFK) is a binding site for substrate. The active-site Electrophile is His93. Glu141 (proton acceptor) is an active-site residue. Residues Ile146, Gly181, and 202–203 (AS) each bind substrate.

Belongs to the triosephosphate isomerase family. In terms of assembly, homotetramer; dimer of dimers.

The protein resides in the cytoplasm. The enzyme catalyses D-glyceraldehyde 3-phosphate = dihydroxyacetone phosphate. Its pathway is carbohydrate biosynthesis; gluconeogenesis. It functions in the pathway carbohydrate degradation; glycolysis; D-glyceraldehyde 3-phosphate from glycerone phosphate: step 1/1. Functionally, involved in the gluconeogenesis. Catalyzes stereospecifically the conversion of dihydroxyacetone phosphate (DHAP) to D-glyceraldehyde-3-phosphate (G3P). The chain is Triosephosphate isomerase from Pyrobaculum calidifontis (strain DSM 21063 / JCM 11548 / VA1).